The following is a 227-amino-acid chain: Staphylococcal superantigen-like 10 (227 aa).

The signal sequence occupies residues 1-30 (MKFTALAKATLALGILTTGTLTTEVHSGHA).

The protein belongs to the staphylococcal/streptococcal toxin family. In terms of assembly, interacts with prothrombin/F2 and coagulation factor X/F12. Interacts with human CXCR4.

It localises to the secreted. Plays a role in the inhibition of host complement activation via the classical pathway by interacting with the Fc region of human IgG and thereby interfering with the IgG/C1q interaction. Also inhibits the penultimate step of plasma clotting by interacting with prothrombin/F2 and coagulation factor X/F12. Does not affect the protease activity of thrombin but interferes with the conversion of prothrombin to thrombin. Interacts with human receptor CXCR4 and specifically inhibits CXCL12-induced calcium mobilization and cell migration. This Staphylococcus aureus (strain NCTC 8325 / PS 47) protein is Staphylococcal superantigen-like 10.